The following is a 165-amino-acid chain: uncharacterized protein (165 aa).

In terms of domain architecture, Macro spans 1–165 (MDIKVVKGSI…EAWEKVLGLR (165 aa)).

This is an uncharacterized protein from Aquifex aeolicus (strain VF5).